A 187-amino-acid chain; its full sequence is ATP synthase subunit b 2 (187 aa).

Residues 39 to 61 (SQLVWLVLSFAALYLLMSRVALP) form a helical membrane-spanning segment.

This sequence belongs to the ATPase B chain family. F-type ATPases have 2 components, F(1) - the catalytic core - and F(0) - the membrane proton channel. F(1) has five subunits: alpha(3), beta(3), gamma(1), delta(1), epsilon(1). F(0) has three main subunits: a(1), b(2) and c(10-14). The alpha and beta chains form an alternating ring which encloses part of the gamma chain. F(1) is attached to F(0) by a central stalk formed by the gamma and epsilon chains, while a peripheral stalk is formed by the delta and b chains.

It localises to the cell inner membrane. Functionally, f(1)F(0) ATP synthase produces ATP from ADP in the presence of a proton or sodium gradient. F-type ATPases consist of two structural domains, F(1) containing the extramembraneous catalytic core and F(0) containing the membrane proton channel, linked together by a central stalk and a peripheral stalk. During catalysis, ATP synthesis in the catalytic domain of F(1) is coupled via a rotary mechanism of the central stalk subunits to proton translocation. In terms of biological role, component of the F(0) channel, it forms part of the peripheral stalk, linking F(1) to F(0). In Parvibaculum lavamentivorans (strain DS-1 / DSM 13023 / NCIMB 13966), this protein is ATP synthase subunit b 2.